The following is a 953-amino-acid chain: Pyruvate, phosphate dikinase, chloroplastic (953 aa).

The transit peptide at 1-77 directs the protein to the chloroplast; the sequence is MMSSLSVEGM…VLNPVSPPVT (77 aa). Residues 55-74 are disordered; the sequence is PELRSSGLTPPRAVLNPVSP. Residue T533 is modified to Phosphothreonine; by PDRP1. H535 serves as the catalytic Tele-phosphohistidine intermediate. Positions 641, 698, 827, 848, 849, 850, and 851 each coordinate substrate. E827 lines the Mg(2+) pocket. D851 lines the Mg(2+) pocket. Residue C913 is the Proton donor of the active site.

Belongs to the PEP-utilizing enzyme family. As to quaternary structure, homotetramer. Requires Mg(2+) as cofactor. Post-translationally, phosphorylation of Thr-533 in the dark inactivates the enzyme. Dephosphorylation upon light stimulation reactivates the enzyme.

It is found in the plastid. The protein resides in the chloroplast. It catalyses the reaction pyruvate + phosphate + ATP = phosphoenolpyruvate + AMP + diphosphate + H(+). Its pathway is photosynthesis; C4 acid pathway. With respect to regulation, activated by light-induced dephosphorylation. Inhibited by dark-induced phosphorylation. Both reactions are catalyzed by PDRP1. Inactivated by cold due to the dissociation of the homotetramer. Formation of phosphoenolpyruvate, which is the primary acceptor of CO(2) in C4 and some Crassulacean acid metabolism plants. The protein is Pyruvate, phosphate dikinase, chloroplastic of Flaveria bidentis (Coastal plain yellowtops).